Reading from the N-terminus, the 306-residue chain is Ribonuclease Z (306 aa).

Zn(2+)-binding residues include His63, His65, Asp67, His68, His140, Asp211, and His269. Catalysis depends on Asp67, which acts as the Proton acceptor.

This sequence belongs to the RNase Z family. As to quaternary structure, homodimer. Zn(2+) serves as cofactor.

It carries out the reaction Endonucleolytic cleavage of RNA, removing extra 3' nucleotides from tRNA precursor, generating 3' termini of tRNAs. A 3'-hydroxy group is left at the tRNA terminus and a 5'-phosphoryl group is left at the trailer molecule.. Zinc phosphodiesterase, which displays some tRNA 3'-processing endonuclease activity. Probably involved in tRNA maturation, by removing a 3'-trailer from precursor tRNA. The protein is Ribonuclease Z of Listeria monocytogenes serotype 4a (strain HCC23).